Here is a 1966-residue protein sequence, read N- to C-terminus: Dedicator of cytokinesis protein 4 (1966 aa).

The 62-residue stretch at 6–67 (EHEKYGVVIA…PSSYVHLKNA (62 aa)) folds into the SH3 domain. Residue Tyr167 is modified to Phosphotyrosine. The residue at position 193 (Thr193) is a Phosphothreonine. The C2 DOCK-type domain maps to 401–574 (RNDLYITIER…ESFCITSFLC (174 aa)). Residues 1190 to 1596 (KTELNKEEMY…LGIQEFSACM (407 aa)) form the DOCKER domain. Phosphoserine occurs at positions 1599, 1607, 1614, 1618, 1620, and 1631. 2 disordered regions span residues 1648-1729 (SQAS…IYPT) and 1742-1966 (IGDG…VSQL). Residues 1672 to 1703 (PSPSTSSLSSTHSASPNVTSSAPSSARASPLL) show a composition bias toward low complexity. At Ser1769 the chain carries Phosphoserine. The SH3-binding signature appears at 1788–1794 (PPVPPRP). Positions 1795 to 1809 (TQTASPARHTTSVSP) are enriched in polar residues. Residues 1838-1863 (SNSPVLSGSYSSGISSLSRCSTSETS) are compositionally biased toward low complexity. Over residues 1864–1873 (GFENQVNEQS) the composition is skewed to polar residues. Positions 1941–1954 (SHLENGARRTDPGP) are enriched in basic and acidic residues.

Belongs to the DOCK family. In terms of assembly, interacts with nucleotide-free Rap1; functions as a guanine nucleotide exchange factor (GEF) for Rap1. Interacts (via DOCKER domain) with RAC1; functions as a guanine nucleotide exchange factor (GEF) for RAC1. Interacts with the SH3 domain of CRK. Interacts with FASLG. Interacts with ELMO2 and EPHA2; mediates activation of RAC1 by EPHA2. Interacts with USH1C (via PDZ 1 domain). In terms of tissue distribution, widely expressed at low level. Highly expressed in skeletal muscle, prostate and ovary. As to expression, may be specifically expressed in the brain and eye.

It localises to the cell membrane. The protein resides in the cell projection. The protein localises to the cytoplasm. It is found in the cytosol. Functionally, functions as a guanine nucleotide exchange factor (GEF) that promotes the exchange of GDP to GTP, converting inactive GDP-bound small GTPases into their active GTP-bound form. Involved in regulation of adherens junction between cells. Plays a role in cell migration. In terms of biological role, has a higher guanine nucleotide exchange factor activity compared to other isoforms. The chain is Dedicator of cytokinesis protein 4 (DOCK4) from Homo sapiens (Human).